Consider the following 434-residue polypeptide: UDP-N-acetylmuramate--L-alanine ligase (434 aa).

ATP is bound at residue 108-114 (GSHGKTT).

This sequence belongs to the MurCDEF family.

Its subcellular location is the cytoplasm. It carries out the reaction UDP-N-acetyl-alpha-D-muramate + L-alanine + ATP = UDP-N-acetyl-alpha-D-muramoyl-L-alanine + ADP + phosphate + H(+). Its pathway is cell wall biogenesis; peptidoglycan biosynthesis. Cell wall formation. The protein is UDP-N-acetylmuramate--L-alanine ligase of Geobacillus thermodenitrificans (strain NG80-2).